Here is a 1223-residue protein sequence, read N- to C-terminus: Glycerophosphocholine phosphodiesterase GDE1 (1223 aa).

The 213-residue stretch at 1 to 213 folds into the SPX domain; the sequence is MKFGKTFANH…GTNQQMSTMK (213 aa). Basic and acidic residues predominate over residues 43-59; the sequence is HNKNSYDEGRPPTKMRD. A disordered region spans residues 43-64; that stretch reads HNKNSYDEGRPPTKMRDSSNSA. 6 ANK repeats span residues 427–456, 472–502, 504–533, 538–567, 572–601, and 605–634; these read YKRT…EWNI, ESLT…NVKL, SSSL…DINY, LHET…DLEI, FGWT…NFDI, and GGWT…LVTH. A Phosphoserine modification is found at Ser653. The 346-residue stretch at 872–1217 folds into the GP-PDE domain; it reads TRVIGHRGLG…DSVLAIRRGL (346 aa). Residues Glu911, Asp913, and His926 each coordinate a divalent metal cation. The residue at position 983 (Ser983) is a Phosphoserine.

It belongs to the GDE1 family. The cofactor is a divalent metal cation.

Its subcellular location is the cytoplasm. The catalysed reaction is sn-glycerol 3-phosphocholine + H2O = sn-glycerol 3-phosphate + choline + H(+). It catalyses the reaction sn-glycero-3-phospho-1D-myo-inositol + H2O = myo-inositol + sn-glycerol 3-phosphate + H(+). In terms of biological role, glycerophosphocholine glycerophosphodiesterase responsible for the hydrolysis of intracellular glycerophosphocholine into glycerol-phosphate and choline. The choline is used for phosphatidyl-choline synthesis. Required for utilization of glycerophosphocholine as phosphate source. May also use glycerophosphoinositol as substrate in vivo. The protein is Glycerophosphocholine phosphodiesterase GDE1 of Saccharomyces cerevisiae (strain ATCC 204508 / S288c) (Baker's yeast).